An 88-amino-acid chain; its full sequence is Small ribosomal subunit protein bS16 (88 aa).

Belongs to the bacterial ribosomal protein bS16 family.

The protein is Small ribosomal subunit protein bS16 of Syntrophomonas wolfei subsp. wolfei (strain DSM 2245B / Goettingen).